The sequence spans 257 residues: Zinc finger protein 8 (257 aa).

Disordered regions lie at residues 48–92 (GDNS…NNNN), 108–128 (QALG…KRGS), and 214–238 (GVYS…PNNW). The segment covering 50–65 (NSDNLSAEPSDHQTTT) has biased composition (polar residues). The segment covering 66–92 (KNDESSENIKDKDKEKDKDKDKDNNNN) has biased composition (basic and acidic residues). A C2H2-type zinc finger spans residues 95–117 (FECHYCFRNFPTSQALGGHQNAH). Over residues 115 to 126 (NAHKRERQHAKR) the composition is skewed to basic residues.

Expressed in developing cauline leaves.

It localises to the nucleus. In terms of biological role, probable transcription factor required for the initiation of inflorescence trichomes in response to gibberellin and cytokinin. Is not involved in the regulation of trichome branching. Is functionally equivalent to GIS2. Acts as a negative regulator of abscisic acid (ABA) signaling during germination and early seedling development. The sequence is that of Zinc finger protein 8 from Arabidopsis thaliana (Mouse-ear cress).